The chain runs to 470 residues: 3-isopropylmalate dehydratase large subunit (470 aa).

The [4Fe-4S] cluster site is built by Cys351, Cys411, and Cys414.

Belongs to the aconitase/IPM isomerase family. LeuC type 1 subfamily. Heterodimer of LeuC and LeuD. [4Fe-4S] cluster is required as a cofactor.

The enzyme catalyses (2R,3S)-3-isopropylmalate = (2S)-2-isopropylmalate. It functions in the pathway amino-acid biosynthesis; L-leucine biosynthesis; L-leucine from 3-methyl-2-oxobutanoate: step 2/4. Its function is as follows. Catalyzes the isomerization between 2-isopropylmalate and 3-isopropylmalate, via the formation of 2-isopropylmaleate. The polypeptide is 3-isopropylmalate dehydratase large subunit (Rhodopseudomonas palustris (strain BisA53)).